Reading from the N-terminus, the 361-residue chain is Uroporphyrinogen decarboxylase (361 aa).

Substrate-binding positions include arginine 27–arginine 31, aspartate 77, tyrosine 154, threonine 209, and histidine 327.

The protein belongs to the uroporphyrinogen decarboxylase family. Homodimer.

It localises to the cytoplasm. The enzyme catalyses uroporphyrinogen III + 4 H(+) = coproporphyrinogen III + 4 CO2. It functions in the pathway porphyrin-containing compound metabolism; protoporphyrin-IX biosynthesis; coproporphyrinogen-III from 5-aminolevulinate: step 4/4. Its function is as follows. Catalyzes the decarboxylation of four acetate groups of uroporphyrinogen-III to yield coproporphyrinogen-III. In Coxiella burnetii (strain RSA 331 / Henzerling II), this protein is Uroporphyrinogen decarboxylase.